Reading from the N-terminus, the 410-residue chain is Imidazolonepropionase (410 aa).

Residues histidine 71 and histidine 73 each contribute to the Fe(3+) site. Zn(2+)-binding residues include histidine 71 and histidine 73. Positions 80, 143, and 175 each coordinate 4-imidazolone-5-propanoate. Position 143 (tyrosine 143) interacts with N-formimidoyl-L-glutamate. Histidine 235 contributes to the Fe(3+) binding site. Histidine 235 is a binding site for Zn(2+). Glutamate 238 contacts 4-imidazolone-5-propanoate. A Fe(3+)-binding site is contributed by aspartate 309. Aspartate 309 serves as a coordination point for Zn(2+).

It belongs to the metallo-dependent hydrolases superfamily. HutI family. Zn(2+) is required as a cofactor. Fe(3+) serves as cofactor.

It localises to the cytoplasm. The catalysed reaction is 4-imidazolone-5-propanoate + H2O = N-formimidoyl-L-glutamate. The protein operates within amino-acid degradation; L-histidine degradation into L-glutamate; N-formimidoyl-L-glutamate from L-histidine: step 3/3. Its function is as follows. Catalyzes the hydrolytic cleavage of the carbon-nitrogen bond in imidazolone-5-propanoate to yield N-formimidoyl-L-glutamate. It is the third step in the universal histidine degradation pathway. The sequence is that of Imidazolonepropionase from Thermoplasma acidophilum (strain ATCC 25905 / DSM 1728 / JCM 9062 / NBRC 15155 / AMRC-C165).